The primary structure comprises 66 residues: Large ribosomal subunit protein bL33c (66 aa).

Belongs to the bacterial ribosomal protein bL33 family.

The protein resides in the plastid. It is found in the chloroplast. The protein is Large ribosomal subunit protein bL33c of Arabis hirsuta (Hairy rock-cress).